Reading from the N-terminus, the 381-residue chain is L-lactate dehydrogenase (381 aa).

One can recognise an FMN hydroxy acid dehydrogenase domain in the interval 1-380 (MIISSTNDYR…TRDALVDLSK (380 aa)). Y24 contacts substrate. FMN-binding residues include S106 and Q127. Substrate is bound at residue Y129. FMN is bound at residue T155. R164 is a binding site for substrate. K251 provides a ligand contact to FMN. The active-site Proton acceptor is H275. R278 provides a ligand contact to substrate. 306-330 (DSGIRNGLDIVRMLALGADATMLGR) serves as a coordination point for FMN.

Belongs to the FMN-dependent alpha-hydroxy acid dehydrogenase family. It depends on FMN as a cofactor.

The protein localises to the cell inner membrane. The catalysed reaction is (S)-lactate + A = pyruvate + AH2. In terms of biological role, catalyzes the conversion of L-lactate to pyruvate. Is coupled to the respiratory chain. The polypeptide is L-lactate dehydrogenase (Actinobacillus pleuropneumoniae serotype 3 (strain JL03)).